Here is a 436-residue protein sequence, read N- to C-terminus: 4-hydroxyphenylpyruvate dioxygenase (436 aa).

VOC domains lie at 38–194 (RFHH…GFEV) and 210–370 (RLDH…IFTK). 3 residues coordinate Fe cation: His-213, His-295, and Glu-381.

This sequence belongs to the 4HPPD family. It depends on Fe cation as a cofactor.

Its subcellular location is the cytoplasm. The enzyme catalyses 3-(4-hydroxyphenyl)pyruvate + O2 = homogentisate + CO2. It participates in amino-acid degradation; L-phenylalanine degradation; acetoacetate and fumarate from L-phenylalanine: step 3/6. It functions in the pathway cofactor biosynthesis; prenylquinone biosynthesis. The chain is 4-hydroxyphenylpyruvate dioxygenase from Plectranthus scutellarioides (Coleus).